A 533-amino-acid chain; its full sequence is Probable polyamine oxidase 5 (533 aa).

Residues glutamate 37, arginine 45, valine 262, and glutamate 501 each coordinate FAD.

This sequence belongs to the flavin monoamine oxidase family. Requires FAD as cofactor. In terms of tissue distribution, expressed in root vasculature, leaves and stems.

The protein localises to the cytoplasm. It carries out the reaction spermine + O2 + H2O = 3-aminopropanal + spermidine + H2O2. The enzyme catalyses N(1)-acetylspermine + O2 + H2O = 3-acetamidopropanal + spermidine + H2O2. The catalysed reaction is norspermine + O2 + H2O = norspermidine + 3-aminopropanal + H2O2. It catalyses the reaction thermospermine + O2 + H2O = 3-aminopropanal + spermidine + H2O2. It participates in amine and polyamine degradation; spermine degradation. In terms of biological role, flavoenzyme involved in polyamine back-conversion. Catalyzes the oxidation of the secondary amino group of polyamines, such as spermine and its acetyl derivatives. Substrate preference is spermine &gt; N(1)-acetylspermine &gt; thermospermine &gt; norspermine. Plays an important role in the regulation of polyamine intracellular concentration. Involved in xylem differentiation by controlling thermospermine homeostasis, and participating in the tightly controlled interplay between auxin and cytokinin that is necessary for proper xylem differentiation. Involved in the production of hydrogen peroxide in response to salt and cold stresses. The sequence is that of Probable polyamine oxidase 5 from Arabidopsis thaliana (Mouse-ear cress).